The primary structure comprises 368 residues: Anaphase-promoting complex subunit MND2 (368 aa).

Disordered regions lie at residues 140–167 and 286–336; these read AQNAEGNNEEDFRQHDSREEDPRNNGSI and RNPY…GITP. Residues 149 to 162 show a composition bias toward basic and acidic residues; it reads EDFRQHDSREEDPR. Position 293 is a phosphoserine (serine 293).

Belongs to the APC15 family. In terms of assembly, the APC/C is composed of at least 13 subunits that stay tightly associated throughout the cell cycle: APC1, APC2, APC4, APC5, APC9, APC11, CDC16, CDC23, CDC26, CDC27, DOC1, MND2 and SWM1. MND2 interacts directly with APC1, APC5 and CDC23.

The protein operates within protein modification; protein ubiquitination. Component of the anaphase promoting complex/cyclosome (APC/C), a cell cycle-regulated E3 ubiquitin-protein ligase complex that controls progression through mitosis and the G1 phase of the cell cycle. The APC/C is thought to confer substrate specificity and, in the presence of ubiquitin-conjugating E2 enzymes, it catalyzes the formation of protein-ubiquitin conjugates that are subsequently degraded by the 26S proteasome. In early mitosis, the APC/C is activated by CDC20 and targets securin PDS1, the B-type cyclin CLB5, and other anaphase inhibitory proteins for proteolysis, thereby triggering the separation of sister chromatids at the metaphase-to-anaphase transition. In late mitosis and in G1, degradation of CLB5 allows activation of the APC/C by CDH1, which is needed to destroy CDC20 and the B-type cyclin CLB2 to allow exit from mitosis and creating the low CDK state necessary for cytokinesis and for reforming prereplicative complexes in G1 prior to another round of replication. This chain is Anaphase-promoting complex subunit MND2 (MND2), found in Saccharomyces cerevisiae (strain ATCC 204508 / S288c) (Baker's yeast).